The following is a 296-amino-acid chain: Acetylglutamate kinase (296 aa).

Substrate is bound by residues glycine 65 to glycine 66, arginine 87, and asparagine 190.

It belongs to the acetylglutamate kinase family. ArgB subfamily.

The protein resides in the cytoplasm. It catalyses the reaction N-acetyl-L-glutamate + ATP = N-acetyl-L-glutamyl 5-phosphate + ADP. The protein operates within amino-acid biosynthesis; L-arginine biosynthesis; N(2)-acetyl-L-ornithine from L-glutamate: step 2/4. Catalyzes the ATP-dependent phosphorylation of N-acetyl-L-glutamate. The chain is Acetylglutamate kinase from Moorella thermoacetica (strain ATCC 39073 / JCM 9320).